A 269-amino-acid chain; its full sequence is Putative pyruvate, phosphate dikinase regulatory protein (269 aa).

147–154 is a binding site for ADP; that stretch reads GLSRTSKT.

This sequence belongs to the pyruvate, phosphate/water dikinase regulatory protein family. PDRP subfamily.

It carries out the reaction N(tele)-phospho-L-histidyl/L-threonyl-[pyruvate, phosphate dikinase] + ADP = N(tele)-phospho-L-histidyl/O-phospho-L-threonyl-[pyruvate, phosphate dikinase] + AMP + H(+). It catalyses the reaction N(tele)-phospho-L-histidyl/O-phospho-L-threonyl-[pyruvate, phosphate dikinase] + phosphate + H(+) = N(tele)-phospho-L-histidyl/L-threonyl-[pyruvate, phosphate dikinase] + diphosphate. Functionally, bifunctional serine/threonine kinase and phosphorylase involved in the regulation of the pyruvate, phosphate dikinase (PPDK) by catalyzing its phosphorylation/dephosphorylation. This chain is Putative pyruvate, phosphate dikinase regulatory protein, found in Clostridium botulinum (strain ATCC 19397 / Type A).